The sequence spans 309 residues: Protein FdhE homolog (309 aa).

It belongs to the FdhE family.

The protein localises to the cytoplasm. Functionally, necessary for formate dehydrogenase activity. In Cronobacter sakazakii (strain ATCC BAA-894) (Enterobacter sakazakii), this protein is Protein FdhE homolog.